A 310-amino-acid chain; its full sequence is Signal peptidase I (310 aa).

Residues 5 to 25 traverse the membrane as a helical segment; it reads LSSFLLASSLITGTLWIINKI. Topologically, residues 26 to 57 are cytoplasmic; it reads LSHNLLDSKIPFNIKKSKIYYKSKQVVQTFAS. A helical membrane pass occupies residues 58–78; the sequence is FFPILIIVFIIRTFICEPFQI. At 79–310 the chain is on the extracellular side; the sequence is PSESMMPTLL…IQFDRIGNIY (232 aa). Active-site residues include serine 82 and lysine 137.

This sequence belongs to the peptidase S26 family.

The protein resides in the cell membrane. The catalysed reaction is Cleavage of hydrophobic, N-terminal signal or leader sequences from secreted and periplasmic proteins.. The polypeptide is Signal peptidase I (lepB) (Buchnera aphidicola subsp. Baizongia pistaciae (strain Bp)).